Consider the following 151-residue polypeptide: Cytochrome c-type biogenesis protein CcmE (151 aa).

Residues 1–8 (MNPLRRKR) are Cytoplasmic-facing. Residues 9 to 29 (LLIILAILVGVGVAVGLALSA) traverse the membrane as a helical; Signal-anchor for type II membrane protein segment. The Periplasmic segment spans residues 30-151 (LQQNINLFYT…QSAPTPAKEG (122 aa)). H124 and Y128 together coordinate heme.

It belongs to the CcmE/CycJ family.

The protein resides in the cell inner membrane. Functionally, heme chaperone required for the biogenesis of c-type cytochromes. Transiently binds heme delivered by CcmC and transfers the heme to apo-cytochromes in a process facilitated by CcmF and CcmH. The protein is Cytochrome c-type biogenesis protein CcmE of Pseudomonas fluorescens biotype C.